The following is a 211-amino-acid chain: Large ribosomal subunit protein uL3 (211 aa).

The residue at position 150 (Gln-150) is an N5-methylglutamine.

This sequence belongs to the universal ribosomal protein uL3 family. As to quaternary structure, part of the 50S ribosomal subunit. Forms a cluster with proteins L14 and L19. Methylated by PrmB.

Functionally, one of the primary rRNA binding proteins, it binds directly near the 3'-end of the 23S rRNA, where it nucleates assembly of the 50S subunit. The polypeptide is Large ribosomal subunit protein uL3 (Pseudomonas syringae pv. tomato (strain ATCC BAA-871 / DC3000)).